The chain runs to 84 residues: Toxin To5 (84 aa).

An N-terminal signal peptide occupies residues 1–19; it reads MKAIIFFIGCLMLIDLVAG. Residues 21-82 form the LCN-type CS-alpha/beta domain; the sequence is RSGYPVTQKG…IWGSYPNNCG (62 aa). 4 cysteine pairs are disulfide-bonded: cysteine 31–cysteine 81, cysteine 35–cysteine 57, cysteine 43–cysteine 62, and cysteine 47–cysteine 64. Cysteine 81 is subject to Cysteine amide.

As to expression, expressed by the venom gland.

Its subcellular location is the secreted. Beta toxins bind voltage-independently at site-4 of sodium channels (Nav) and shift the voltage of activation toward more negative potentials thereby affecting sodium channel activation and promoting spontaneous and repetitive firing. In Tityus obscurus (Amazonian scorpion), this protein is Toxin To5.